Reading from the N-terminus, the 221-residue chain is Uracil-DNA glycosylase 1 (221 aa).

Asp61 serves as the catalytic Proton acceptor.

The protein belongs to the uracil-DNA glycosylase (UDG) superfamily. UNG family.

It localises to the cytoplasm. The catalysed reaction is Hydrolyzes single-stranded DNA or mismatched double-stranded DNA and polynucleotides, releasing free uracil.. Its function is as follows. Excises uracil residues from the DNA which can arise as a result of misincorporation of dUMP residues by DNA polymerase or due to deamination of cytosine. This is Uracil-DNA glycosylase 1 from Listeria monocytogenes serovar 1/2a (strain ATCC BAA-679 / EGD-e).